A 306-amino-acid polypeptide reads, in one-letter code: Mycothiol acetyltransferase (306 aa).

N-acetyltransferase domains follow at residues 5–162 and 155–306; these read VWAE…TFVP and VRLR…AQGS. Acetyl-CoA-binding positions include 82-84 and 90-95; these read LIV and RRGHGT. The 1D-myo-inositol 2-(L-cysteinylamino)-2-deoxy-alpha-D-glucopyranoside site is built by glutamate 182, lysine 222, and glutamate 238. Acetyl-CoA contacts are provided by residues 242–244 and 249–255; these read VGV and QGGGLGK. Tyrosine 276 lines the 1D-myo-inositol 2-(L-cysteinylamino)-2-deoxy-alpha-D-glucopyranoside pocket.

Belongs to the acetyltransferase family. MshD subfamily. As to quaternary structure, monomer.

It carries out the reaction 1D-myo-inositol 2-(L-cysteinylamino)-2-deoxy-alpha-D-glucopyranoside + acetyl-CoA = mycothiol + CoA + H(+). In terms of biological role, catalyzes the transfer of acetyl from acetyl-CoA to desacetylmycothiol (Cys-GlcN-Ins) to form mycothiol. In Saccharomonospora viridis (strain ATCC 15386 / DSM 43017 / JCM 3036 / CCUG 5913 / NBRC 12207 / NCIMB 9602 / P101) (Thermoactinomyces viridis), this protein is Mycothiol acetyltransferase.